A 60-amino-acid chain; its full sequence is UPF0434 protein Pnap_1922 (60 aa).

This sequence belongs to the UPF0434 family.

The polypeptide is UPF0434 protein Pnap_1922 (Polaromonas naphthalenivorans (strain CJ2)).